We begin with the raw amino-acid sequence, 233 residues long: Protein lin-7 homolog A (233 aa).

A Kinase interacting site motif is present at residues Met-14–Asp-28. The 56-residue stretch at Leu-25–Gly-80 folds into the L27 domain. The PDZ domain occupies Val-108–Pro-190. The segment at Leu-214–Ser-233 is disordered.

It belongs to the lin-7 family. Forms a complex with CASK and CASKIN1. Component of the brain-specific heterotrimeric complex (LIN-10-LIN-2-LIN-7 complex) composed of at least APBA1, CASK, and LIN7, which associates with the motor protein KIF17 to transport vesicles along microtubules. Can also interact with other modular proteins containing protein-protein interaction domains like PALS1, PALS2, MPP7, DLG1, DLG2 and DLG3 through its L27 domain. Interacts with DLG4, GRIN2B and MARCHF11 as well as CDH1 and CTNNB1, the channels KCNJ12/Kir2.2, KCNJ4/Kir2.3 and probably KCNJ2/Kir2.1 and SLC6A12/BGT-1 via its PDZ domain. The association of LIN7A with cadherin and beta-catenin is calcium-dependent, occurs at synaptic junctions and requires the actin cytoskeleton. Interacts with EGFR, ERBB2, ERBB3 and ERBB4 with both PDZ and KID domains. Associates with KIF17 via APBA1. Interacts with HTR4. Forms a tripartite complex composed of DLG1, MPP7 and LIN7 (LIN7A or LIN7C). As to expression, expressed in the kidney, along the length of the nephron.

Its subcellular location is the cell membrane. It is found in the basolateral cell membrane. The protein resides in the cell junction. It localises to the postsynaptic density membrane. The protein localises to the tight junction. Its function is as follows. Plays a role in establishing and maintaining the asymmetric distribution of channels and receptors at the plasma membrane of polarized cells. Forms membrane-associated multiprotein complexes that may regulate delivery and recycling of proteins to the correct membrane domains. The tripartite complex composed of LIN7 (LIN7A, LIN7B or LIN7C), CASK and APBA1 associates with the motor protein KIF17 to transport vesicles containing N-methyl-D-aspartate (NMDA) receptor subunit NR2B along microtubules. This complex may have the potential to couple synaptic vesicle exocytosis to cell adhesion in brain. Ensures the proper localization of GRIN2B (subunit 2B of the NMDA receptor) to neuronal postsynaptic density and may function in localizing synaptic vesicles at synapses where it is recruited by beta-catenin and cadherin. Required to localize Kir2 channels, GABA transporter (SLC6A12) and EGFR/ERBB1, ERBB2, ERBB3 and ERBB4 to the basolateral membrane of epithelial cells. The sequence is that of Protein lin-7 homolog A (Lin7a) from Mus musculus (Mouse).